The sequence spans 67 residues: Small ribosomal subunit protein eS27 (67 aa).

Zn(2+)-binding residues include Cys22, Cys25, Cys41, and Cys44. The C4-type zinc finger occupies 22 to 44; it reads CPDCGNEQITFSHAAMVVRCLVC.

This sequence belongs to the eukaryotic ribosomal protein eS27 family. In terms of assembly, part of the 30S ribosomal subunit. Zn(2+) is required as a cofactor.

The chain is Small ribosomal subunit protein eS27 from Pyrobaculum aerophilum (strain ATCC 51768 / DSM 7523 / JCM 9630 / CIP 104966 / NBRC 100827 / IM2).